The sequence spans 151 residues: Ribosome maturation factor RimP (151 aa).

This sequence belongs to the RimP family.

The protein localises to the cytoplasm. Functionally, required for maturation of 30S ribosomal subunits. This Vibrio atlanticus (strain LGP32) (Vibrio splendidus (strain Mel32)) protein is Ribosome maturation factor RimP.